A 518-amino-acid polypeptide reads, in one-letter code: Metal transporter Nramp1 (518 aa).

12 consecutive transmembrane segments (helical) span residues 35-55 (FLSH…PGNM), 68-88 (ELLW…SLSA), 107-127 (PVWV…ASDI), 131-151 (IGTG…GVLI), 172-192 (VVVA…MSIV), 218-238 (IALL…ALVL), 255-275 (FFLF…IAII), 315-337 (SATV…GTYA), 357-377 (LMTR…GGSS), 382-402 (LIVI…IPLL), 418-438 (IYIV…NIYF), and 458-478 (VLIG…VIYL).

The protein belongs to the NRAMP (TC 2.A.55) family.

Its subcellular location is the membrane. In terms of biological role, probable metal transporter that may participate in the control of iron homeostasis. The protein is Metal transporter Nramp1 (NRAMP1) of Oryza sativa subsp. japonica (Rice).